A 155-amino-acid polypeptide reads, in one-letter code: Ribosome maturation factor RimP (155 aa).

The protein belongs to the RimP family.

The protein resides in the cytoplasm. Required for maturation of 30S ribosomal subunits. This chain is Ribosome maturation factor RimP, found in Phocaeicola vulgatus (strain ATCC 8482 / DSM 1447 / JCM 5826 / CCUG 4940 / NBRC 14291 / NCTC 11154) (Bacteroides vulgatus).